A 133-amino-acid polypeptide reads, in one-letter code: Phosphoribosyl-AMP cyclohydrolase (133 aa).

Aspartate 77 contacts Mg(2+). Position 78 (cysteine 78) interacts with Zn(2+). Residues aspartate 79 and aspartate 81 each contribute to the Mg(2+) site. 2 residues coordinate Zn(2+): cysteine 95 and cysteine 102.

It belongs to the PRA-CH family. In terms of assembly, homodimer. The cofactor is Mg(2+). Requires Zn(2+) as cofactor.

It localises to the cytoplasm. It catalyses the reaction 1-(5-phospho-beta-D-ribosyl)-5'-AMP + H2O = 1-(5-phospho-beta-D-ribosyl)-5-[(5-phospho-beta-D-ribosylamino)methylideneamino]imidazole-4-carboxamide. Its pathway is amino-acid biosynthesis; L-histidine biosynthesis; L-histidine from 5-phospho-alpha-D-ribose 1-diphosphate: step 3/9. Functionally, catalyzes the hydrolysis of the adenine ring of phosphoribosyl-AMP. This is Phosphoribosyl-AMP cyclohydrolase from Thiobacillus denitrificans (strain ATCC 25259 / T1).